The following is a 396-amino-acid chain: Elongation factor Tu (396 aa).

The tr-type G domain maps to 10 to 206 (KPHVNVGTIG…ALDNYIPLPE (197 aa)). A G1 region spans residues 19–26 (GHVDHGKT). 19–26 (GHVDHGKT) is a GTP binding site. Thr-26 is a Mg(2+) binding site. The interval 60-64 (GITIN) is G2. The segment at 81-84 (DCPG) is G3. GTP-binding positions include 81-85 (DCPGH) and 136-139 (NKCD). Residues 136–139 (NKCD) are G4. A G5 region spans residues 174–176 (SAK).

Belongs to the TRAFAC class translation factor GTPase superfamily. Classic translation factor GTPase family. EF-Tu/EF-1A subfamily. In terms of assembly, monomer.

The protein resides in the cytoplasm. It catalyses the reaction GTP + H2O = GDP + phosphate + H(+). Its function is as follows. GTP hydrolase that promotes the GTP-dependent binding of aminoacyl-tRNA to the A-site of ribosomes during protein biosynthesis. In Polaromonas naphthalenivorans (strain CJ2), this protein is Elongation factor Tu.